The sequence spans 296 residues: Diaminopimelate epimerase (296 aa).

2 residues coordinate substrate: asparagine 11 and asparagine 78. The Proton donor role is filled by cysteine 87. Residues glycine 88–asparagine 89, asparagine 167, asparagine 203, and glutamate 221–arginine 222 each bind substrate. Residue cysteine 230 is the Proton acceptor of the active site. Glycine 231 to threonine 232 lines the substrate pocket.

This sequence belongs to the diaminopimelate epimerase family. Homodimer.

The protein localises to the cytoplasm. The catalysed reaction is (2S,6S)-2,6-diaminopimelate = meso-2,6-diaminopimelate. Its pathway is amino-acid biosynthesis; L-lysine biosynthesis via DAP pathway; DL-2,6-diaminopimelate from LL-2,6-diaminopimelate: step 1/1. Its function is as follows. Catalyzes the stereoinversion of LL-2,6-diaminopimelate (L,L-DAP) to meso-diaminopimelate (meso-DAP), a precursor of L-lysine and an essential component of the bacterial peptidoglycan. The chain is Diaminopimelate epimerase from Mycobacterium leprae (strain Br4923).